We begin with the raw amino-acid sequence, 473 residues long: Lactate utilization protein B (473 aa).

4Fe-4S ferredoxin-type domains follow at residues 303–333 and 352–381; these read GTAFQPVLQCIRCAACINVCPVYRHVGGHSY and YDDYQELPFASSLCAACTDACPVKIPLHEL. [4Fe-4S] cluster contacts are provided by C312, C315, C318, C322, C365, C368, and C372.

This sequence belongs to the LutB/YkgF family.

Is involved in L-lactate degradation and allows cells to grow with lactate as the sole carbon source. Has probably a role as an electron transporter during oxidation of L-lactate. The polypeptide is Lactate utilization protein B (Bacillus pumilus (strain SAFR-032)).